A 451-amino-acid polypeptide reads, in one-letter code: MHGYFGCNAAAEPGYSAFLGTPQICVTKMSTRNCQGMDSVIKPLDTIPEDKKVRVQRTQSTFDPFEKPANQVKRVHSENNACINFKTSSTGKESPKVRRHSSPSSPTSPKFGKADSYEKLEKLGEGSYATVYKGKSKVNGKLVALKVIRLQEEEGTPFTAIREASLLKGLKHANIVLLHDIIHTKETLTLVFEYVHTDLCQYMDKHPGGLHPDNVKLFLFQLLRGLSYIHQRYILHRDLKPQNLLISDTGELKLADFGLARAKSVPSHTYSNEVVTLWYRPPDVLLGSTEYSTCLDMWGVGCIFVEMIQGVAAFPGMKDIQDQLERIFLVLGTPNEDTWPGVHSLPHFKPERFTLYSSKNLRQAWNKLSYVNHAEDLASKLLQCSPKNRLSAQAALSHEYFSDLPPRLWELTDMSSIFTIPNVRLQPEAGESMRAFGKNNSYGKSLSNSKH.

Residues S60 and S77 each carry the phosphoserine modification. Residues 84–114 are disordered; the sequence is NFKTSSTGKESPKVRRHSSPSSPTSPKFGKA. S116 bears the Phosphoserine mark. Residues 117–401 enclose the Protein kinase domain; the sequence is YEKLEKLGEG…AQAALSHEYF (285 aa). Residues 123–131 and K146 contribute to the ATP site; that span reads LGEGSYATV. D238 acts as the Proton acceptor in catalysis.

It belongs to the protein kinase superfamily. CMGC Ser/Thr protein kinase family. CDC2/CDKX subfamily. Found in a complex with LRP6, CCNY and CAPRIN2 during G2/M stage; CAPRIN2 functions as a scaffold for the complex by binding to CCNY via its N terminus and to CDK14 via its C terminus. Interacts with CCNY; CCNY mediates its recruitment to the plasma membrane and promotes phosphorylation of LRP6. Interacts with CCDN3 and CDKN1A. Interacts with SEPT8. Interacts with 14-3-3 proteina YWHAB, YWHAE, YWHAH and YWHAQ.

Its subcellular location is the cell membrane. The protein resides in the cytoplasm. It localises to the nucleus. The enzyme catalyses L-seryl-[protein] + ATP = O-phospho-L-seryl-[protein] + ADP + H(+). The catalysed reaction is L-threonyl-[protein] + ATP = O-phospho-L-threonyl-[protein] + ADP + H(+). Its activity is regulated as follows. Serine/threonine-protein kinase activity is promoted by associated cyclins CCDN3 and CCNY and repressed by CDKN1A. Its function is as follows. Serine/threonine-protein kinase involved in the control of the eukaryotic cell cycle, whose activity is controlled by an associated cyclin. Acts as a cell-cycle regulator of Wnt signaling pathway during G2/M phase by mediating the phosphorylation of LRP6 at 'Ser-1490', leading to the activation of the Wnt signaling pathway. Acts as a regulator of cell cycle progression and cell proliferation via its interaction with CCDN3. Phosphorylates RB1 in vitro, however the relevance of such result remains to be confirmed in vivo. May also play a role in meiosis, neuron differentiation and may indirectly act as a negative regulator of insulin-responsive glucose transport. This is Cyclin-dependent kinase 14 (CDK14) from Plecturocebus moloch (Dusky titi monkey).